Reading from the N-terminus, the 468-residue chain is Glutamate--tRNA ligase (468 aa).

The 'HIGH' region signature appears at 10–20 (PSPTGDLHIGG). The Zn(2+) site is built by Cys99, Cys101, Cys126, and Asp128. The 'KMSKS' region signature appears at 236 to 240 (RLSKR). Lys239 serves as a coordination point for ATP.

Belongs to the class-I aminoacyl-tRNA synthetase family. Glutamate--tRNA ligase type 1 subfamily. As to quaternary structure, monomer. The cofactor is Zn(2+).

It is found in the cytoplasm. The catalysed reaction is tRNA(Glu) + L-glutamate + ATP = L-glutamyl-tRNA(Glu) + AMP + diphosphate. Catalyzes the attachment of glutamate to tRNA(Glu) in a two-step reaction: glutamate is first activated by ATP to form Glu-AMP and then transferred to the acceptor end of tRNA(Glu). This Syntrophobacter fumaroxidans (strain DSM 10017 / MPOB) protein is Glutamate--tRNA ligase.